A 239-amino-acid polypeptide reads, in one-letter code: Ribonuclease PH (239 aa).

Phosphate-binding positions include arginine 86 and 124–126 (GTR).

The protein belongs to the RNase PH family. As to quaternary structure, homohexameric ring arranged as a trimer of dimers.

It carries out the reaction tRNA(n+1) + phosphate = tRNA(n) + a ribonucleoside 5'-diphosphate. Its function is as follows. Phosphorolytic 3'-5' exoribonuclease that plays an important role in tRNA 3'-end maturation. Removes nucleotide residues following the 3'-CCA terminus of tRNAs; can also add nucleotides to the ends of RNA molecules by using nucleoside diphosphates as substrates, but this may not be physiologically important. Probably plays a role in initiation of 16S rRNA degradation (leading to ribosome degradation) during starvation. In Rickettsia akari (strain Hartford), this protein is Ribonuclease PH.